A 290-amino-acid polypeptide reads, in one-letter code: Diaminopimelate epimerase (290 aa).

N17, Q49, and N69 together coordinate substrate. Catalysis depends on C78, which acts as the Proton donor. Residues G79 to N80, N166, N199, and E217 to R218 contribute to the substrate site. Residue C226 is the Proton acceptor of the active site. Substrate is bound at residue G227 to S228.

Belongs to the diaminopimelate epimerase family. As to quaternary structure, homodimer.

It is found in the cytoplasm. The catalysed reaction is (2S,6S)-2,6-diaminopimelate = meso-2,6-diaminopimelate. Its pathway is amino-acid biosynthesis; L-lysine biosynthesis via DAP pathway; DL-2,6-diaminopimelate from LL-2,6-diaminopimelate: step 1/1. In terms of biological role, catalyzes the stereoinversion of LL-2,6-diaminopimelate (L,L-DAP) to meso-diaminopimelate (meso-DAP), a precursor of L-lysine and an essential component of the bacterial peptidoglycan. The chain is Diaminopimelate epimerase from Afipia carboxidovorans (strain ATCC 49405 / DSM 1227 / KCTC 32145 / OM5) (Oligotropha carboxidovorans).